The primary structure comprises 299 residues: Bifunctional protein FolD (299 aa).

NADP(+) contacts are provided by residues 166–168 (GRS), serine 191, and isoleucine 232.

This sequence belongs to the tetrahydrofolate dehydrogenase/cyclohydrolase family. In terms of assembly, homodimer.

It carries out the reaction (6R)-5,10-methylene-5,6,7,8-tetrahydrofolate + NADP(+) = (6R)-5,10-methenyltetrahydrofolate + NADPH. The catalysed reaction is (6R)-5,10-methenyltetrahydrofolate + H2O = (6R)-10-formyltetrahydrofolate + H(+). It participates in one-carbon metabolism; tetrahydrofolate interconversion. Functionally, catalyzes the oxidation of 5,10-methylenetetrahydrofolate to 5,10-methenyltetrahydrofolate and then the hydrolysis of 5,10-methenyltetrahydrofolate to 10-formyltetrahydrofolate. This chain is Bifunctional protein FolD, found in Dinoroseobacter shibae (strain DSM 16493 / NCIMB 14021 / DFL 12).